Reading from the N-terminus, the 391-residue chain is Ammonium transporter Amt1 (391 aa).

Topologically, residues 1-7 are extracellular; that stretch reads MSDGNVA. The helical transmembrane segment at 8–27 threads the bilayer; the sequence is WILASTALVMLMVPGVGFFY. Residues 28 to 38 are Cytoplasmic-facing; the sequence is AGMVRRKNAVN. A helical transmembrane segment spans residues 39-57; it reads MIALSFISLIITVLLWIFY. Over 58-89 the chain is Extracellular; that stretch reads GYSVSFGNDISGIIGGLNYALLSGVKGEDLLF. Residues 90–106 traverse the membrane as a helical segment; sequence MMYQMMFAAVTIAILTS. Topologically, residues 107 to 113 are cytoplasmic; sequence AIAERAK. A helical transmembrane segment spans residues 114-137; it reads VSSFILLSALWLTFVYAPFAHWLW. Topologically, residues 138-152 are extracellular; sequence GGGWLAKLGALDFAG. Residues 153–170 form a helical membrane-spanning segment; that stretch reads GMVVHISSGFAALAVAMT. Residues 171-188 are Cytoplasmic-facing; the sequence is IGKRAGFEEYSIEPHSIP. The helical transmembrane segment at 189–208 threads the bilayer; that stretch reads LTLIGAALLWFGWFGFNGGS. The Extracellular portion of the chain corresponds to 209-217; the sequence is ALAANDVAI. A helical membrane pass occupies residues 218-237; that stretch reads NAVVVTNTSAAVAGFVWMVI. The Cytoplasmic segment spans residues 238–245; the sequence is GWIKGKPG. Residues 246–263 traverse the membrane as a helical segment; that stretch reads SLGIVSGAIAGLAAITPA. Residues 264 to 268 are Extracellular-facing; sequence AGFVD. Residues 269–287 traverse the membrane as a helical segment; sequence VKGAIVIGLVAGIVCYLAM. Topologically, residues 288-300 are cytoplasmic; the sequence is DFRIKKKIDESLD. A helical membrane pass occupies residues 301 to 319; that stretch reads AWAIHGIGGLWGSVAVGIL. The Extracellular segment spans residues 320-337; that stretch reads ANPEVNGYAGLLFGNPQL. A helical transmembrane segment spans residues 338–363; sequence LVSQLIAVASTTAYAFLVTLILAKAV. Residues 364 to 391 lie on the Cytoplasmic side of the membrane; that stretch reads DAAVGLRVSSQEEYVGLDLSQHEEVAYT.

It belongs to the ammonia transporter channel (TC 1.A.11.2) family. Homotrimer.

The protein localises to the cell membrane. In terms of biological role, involved in the uptake of ammonium/ammonia (NH(4)(+)/NH(3)). Transport is electrogenic. Transport the ammonium and methylammonium cation with high specificity. The protein is Ammonium transporter Amt1 of Archaeoglobus fulgidus (strain ATCC 49558 / DSM 4304 / JCM 9628 / NBRC 100126 / VC-16).